A 208-amino-acid polypeptide reads, in one-letter code: Thymidylate kinase (208 aa).

7 to 14 (GIDGSGKS) contributes to the ATP binding site.

It belongs to the thymidylate kinase family.

It catalyses the reaction dTMP + ATP = dTDP + ADP. In terms of biological role, phosphorylation of dTMP to form dTDP in both de novo and salvage pathways of dTTP synthesis. This chain is Thymidylate kinase, found in Kosmotoga olearia (strain ATCC BAA-1733 / DSM 21960 / TBF 19.5.1).